A 575-amino-acid chain; its full sequence is Amyloid-beta A4 precursor protein-binding family A member 3 (575 aa).

Met1 carries the N-acetylmethionine modification. The span at 1–10 shows a compositional bias: polar residues; the sequence is MDFPTISRSP. Disordered stretches follow at residues 1-50 and 118-211; these read MDFP…LSRM and CEEC…GPCD. Position 11 is a phosphoserine (Ser11). A compositionally biased stretch (acidic residues) spans 143 to 153; it reads EDPDEDSDSPE. Positions 156–184 are enriched in low complexity; it reads EGASAEQEGSRSSSSSPEPWLETVPLVTP. Ser171 carries the post-translational modification Phosphoserine. The required for interaction with NECAB3 stretch occupies residues 215-364; that stretch reads LLDGVIFGAR…QFLRESGIDP (150 aa). A PID domain is found at 217 to 381; the sequence is DGVIFGARYL…SPGACHLHNG (165 aa). Ser372 bears the Phosphoserine mark. PDZ domains lie at 394-480 and 485-560; these read EVHL…IVHC and TAII…TMPA.

In terms of assembly, binds to the cytoplasmic domain of amyloid protein (APP) in vivo. Interacts with HIF1AN (via N-terminus). Interacts with NECAB3; seems to mediate the interaction between NECAB3 and HIF1AN. Expressed in all tissues examined with lower levels in brain and testis.

The protein localises to the cytoplasm. Its subcellular location is the perinuclear region. Functionally, may modulate processing of the amyloid-beta precursor protein (APP) and hence formation of APP-beta. May enhance the activity of HIF1A in macrophages by inhibiting the activity of HIF1AN. The protein is Amyloid-beta A4 precursor protein-binding family A member 3 (APBA3) of Homo sapiens (Human).